The sequence spans 393 residues: Thermostable carboxypeptidase 2 (393 aa).

Residues histidine 104, aspartate 109, and histidine 245 each contribute to the Zn(2+) site. Catalysis depends on tyrosine 302, which acts as the Proton donor. The Nucleophile role is filled by glutamate 373.

Belongs to the peptidase M20 family. As to quaternary structure, homotetramer. The cofactor is Zn(2+).

Can release basic, acidic, aromatic, and, to a lesser extent, aliphatic amino acids. The chain is Thermostable carboxypeptidase 2 (cpsA2) from Saccharolobus solfataricus (strain ATCC 35092 / DSM 1617 / JCM 11322 / P2) (Sulfolobus solfataricus).